The primary structure comprises 313 residues: Ribosomal RNA small subunit methyltransferase H (313 aa).

Residues alanine 33–histidine 35, aspartate 53, phenylalanine 82, aspartate 103, and glutamine 110 contribute to the S-adenosyl-L-methionine site.

This sequence belongs to the methyltransferase superfamily. RsmH family.

It localises to the cytoplasm. The enzyme catalyses cytidine(1402) in 16S rRNA + S-adenosyl-L-methionine = N(4)-methylcytidine(1402) in 16S rRNA + S-adenosyl-L-homocysteine + H(+). Functionally, specifically methylates the N4 position of cytidine in position 1402 (C1402) of 16S rRNA. The sequence is that of Ribosomal RNA small subunit methyltransferase H from Ruminiclostridium cellulolyticum (strain ATCC 35319 / DSM 5812 / JCM 6584 / H10) (Clostridium cellulolyticum).